The following is a 161-amino-acid chain: F-box only protein 48 (161 aa).

The disordered stretch occupies residues 1 to 25; that stretch reads MKKTSKKNNNFKIPGTELNSADAER. One can recognise an F-box domain in the interval 32 to 79; sequence RNFVELLPLEVTYKIFSQLDIQSLCRASRTCTGWNCAIRNNDSLWKPH.

The protein is F-box only protein 48 (Fbxo48) of Mus musculus (Mouse).